The sequence spans 387 residues: GTPase Obg (387 aa).

One can recognise an Obg domain in the interval 1-159 (MKFVDEAVIR…RSLRLELMLL (159 aa)). The OBG-type G domain maps to 160–333 (ADVGLLGMPN…LALKLMDFID (174 aa)). GTP is bound by residues 166 to 173 (GMPNAGKS), 191 to 195 (FTTLV), 213 to 216 (DIPG), 283 to 286 (NKTD), and 314 to 316 (SAY). Mg(2+) contacts are provided by Ser-173 and Thr-193.

The protein belongs to the TRAFAC class OBG-HflX-like GTPase superfamily. OBG GTPase family. As to quaternary structure, monomer. The cofactor is Mg(2+).

It is found in the cytoplasm. An essential GTPase which binds GTP, GDP and possibly (p)ppGpp with moderate affinity, with high nucleotide exchange rates and a fairly low GTP hydrolysis rate. Plays a role in control of the cell cycle, stress response, ribosome biogenesis and in those bacteria that undergo differentiation, in morphogenesis control. The polypeptide is GTPase Obg (Shewanella loihica (strain ATCC BAA-1088 / PV-4)).